Consider the following 162-residue polypeptide: Beta-lactoglobulin-3 (162 aa).

Disulfide bonds link Cys66–Cys160 and Cys106–Cys119.

Belongs to the calycin superfamily. Lipocalin family. Monomer.

The protein resides in the secreted. In terms of biological role, lactoglobulin is the primary component of whey, it binds retinol and is probably involved in the transport of that molecule. This is Beta-lactoglobulin-3 (LGB3) from Felis catus (Cat).